The chain runs to 246 residues: 1-(5-phosphoribosyl)-5-[(5-phosphoribosylamino)methylideneamino] imidazole-4-carboxamide isomerase (246 aa).

Catalysis depends on D10, which acts as the Proton acceptor. D131 serves as the catalytic Proton donor.

The protein belongs to the HisA/HisF family.

It localises to the cytoplasm. The enzyme catalyses 1-(5-phospho-beta-D-ribosyl)-5-[(5-phospho-beta-D-ribosylamino)methylideneamino]imidazole-4-carboxamide = 5-[(5-phospho-1-deoxy-D-ribulos-1-ylimino)methylamino]-1-(5-phospho-beta-D-ribosyl)imidazole-4-carboxamide. The protein operates within amino-acid biosynthesis; L-histidine biosynthesis; L-histidine from 5-phospho-alpha-D-ribose 1-diphosphate: step 4/9. The chain is 1-(5-phosphoribosyl)-5-[(5-phosphoribosylamino)methylideneamino] imidazole-4-carboxamide isomerase from Acidiphilium cryptum (strain JF-5).